Reading from the N-terminus, the 381-residue chain is ATP synthase subunit a (381 aa).

The disordered stretch occupies residues 24-73; sequence PVAAPVEQHGQAPEAAPDAHGSPAGEPGAAVEAHAAAAEHGEAAGHEGGH. Over residues 47–59 the composition is skewed to low complexity; the sequence is AGEPGAAVEAHAA. Over residues 60 to 73 the composition is skewed to basic and acidic residues; sequence AAEHGEAAGHEGGH. 6 consecutive transmembrane segments (helical) span residues 128-148, 190-210, 215-235, 255-275, 290-310, and 316-336; these read KHVVMMWLASALLLVVVLGAV, LVTAFFFILFLNLFGLLPFSA, NLSVTVAMALFTFVITQYAAI, LAPLWLIMIPVEFLGLFTKPF, FVILALLGLIFALGTPWVAFG, and LSIFLLELFVAFVQAYIFTML. Residues 351–360 show a composition bias toward basic and acidic residues; that stretch reads DHGHAEEHGH. Positions 351-381 are disordered; it reads DHGHAEEHGHAGPAAGSEHGSHVAGASPGHG.

The protein belongs to the ATPase A chain family. In terms of assembly, F-type ATPases have 2 components, CF(1) - the catalytic core - and CF(0) - the membrane proton channel. CF(1) has five subunits: alpha(3), beta(3), gamma(1), delta(1), epsilon(1). CF(0) has three main subunits: a(1), b(2) and c(9-12). The alpha and beta chains form an alternating ring which encloses part of the gamma chain. CF(1) is attached to CF(0) by a central stalk formed by the gamma and epsilon chains, while a peripheral stalk is formed by the delta and b chains.

The protein resides in the cell inner membrane. In terms of biological role, key component of the proton channel; it plays a direct role in the translocation of protons across the membrane. In Anaeromyxobacter dehalogenans (strain 2CP-C), this protein is ATP synthase subunit a.